Consider the following 322-residue polypeptide: tRNA U34 carboxymethyltransferase (322 aa).

Carboxy-S-adenosyl-L-methionine-binding positions include Lys-91, Trp-105, Lys-110, Gly-129, 179-180, Met-195, Tyr-199, and Arg-314; that span reads LE.

It belongs to the class I-like SAM-binding methyltransferase superfamily. CmoB family. Homotetramer.

The enzyme catalyses carboxy-S-adenosyl-L-methionine + 5-hydroxyuridine(34) in tRNA = 5-carboxymethoxyuridine(34) in tRNA + S-adenosyl-L-homocysteine + H(+). Functionally, catalyzes carboxymethyl transfer from carboxy-S-adenosyl-L-methionine (Cx-SAM) to 5-hydroxyuridine (ho5U) to form 5-carboxymethoxyuridine (cmo5U) at position 34 in tRNAs. This Pseudomonas aeruginosa (strain ATCC 15692 / DSM 22644 / CIP 104116 / JCM 14847 / LMG 12228 / 1C / PRS 101 / PAO1) protein is tRNA U34 carboxymethyltransferase.